The sequence spans 126 residues: Spermidine export protein MdtJ (126 aa).

Helical transmembrane passes span 1–21 (MMIYWIFLGLAIVAEIIGTLS), 32–52 (TGHIVMYFMITGSYIMLALAV), 55–75 (VALGVAYALWEGIGILIITVF), and 82–102 (ESLSPLKIAGLVTLVGGIMLV). The disordered stretch occupies residues 104-126 (SGTRKPKKPNSPNRNSGEHHATA).

The protein belongs to the drug/metabolite transporter (DMT) superfamily. Small multidrug resistance (SMR) (TC 2.A.7.1) family. MdtJ subfamily. Forms a complex with MdtI.

The protein localises to the cell inner membrane. Its function is as follows. Catalyzes the excretion of spermidine. The sequence is that of Spermidine export protein MdtJ from Yersinia enterocolitica serotype O:8 / biotype 1B (strain NCTC 13174 / 8081).